A 246-amino-acid chain; its full sequence is Ribonuclease 3 (246 aa).

The RNase III domain occupies 18–147; it reads FQELQNKIGI…FIGALYLDQG (130 aa). Residue Glu60 participates in Mg(2+) binding. Asp64 is a catalytic residue. Residues Asp133 and Glu136 each contribute to the Mg(2+) site. Glu136 is an active-site residue. The DRBM domain occupies 173 to 242; that stretch reads DFKSQLQELV…AQMALETLRA (70 aa).

This sequence belongs to the ribonuclease III family. As to quaternary structure, homodimer. Mg(2+) serves as cofactor.

Its subcellular location is the cytoplasm. It carries out the reaction Endonucleolytic cleavage to 5'-phosphomonoester.. Digests double-stranded RNA. Involved in the processing of primary rRNA transcript to yield the immediate precursors to the large and small rRNAs (23S and 16S). Processes some mRNAs, and tRNAs when they are encoded in the rRNA operon. Processes pre-crRNA and tracrRNA of type II CRISPR loci if present in the organism. This Geobacillus kaustophilus (strain HTA426) protein is Ribonuclease 3.